A 183-amino-acid chain; its full sequence is tRNA-splicing endonuclease (183 aa).

Active-site residues include Y120, H128, and K159.

It belongs to the tRNA-intron endonuclease family. Archaeal short subfamily. As to quaternary structure, homotetramer; although the tetramer contains four active sites, only two participate in the cleavage. Therefore, it should be considered as a dimer of dimers.

It carries out the reaction pretRNA = a 3'-half-tRNA molecule with a 5'-OH end + a 5'-half-tRNA molecule with a 2',3'-cyclic phosphate end + an intron with a 2',3'-cyclic phosphate and a 5'-hydroxyl terminus.. In terms of biological role, endonuclease that removes tRNA introns. Cleaves pre-tRNA at the 5'- and 3'-splice sites to release the intron. The products are an intron and two tRNA half-molecules bearing 2',3' cyclic phosphate and 5'-OH termini. Recognizes a pseudosymmetric substrate in which 2 bulged loops of 3 bases are separated by a stem of 4 bp. The chain is tRNA-splicing endonuclease from Pyrobaculum aerophilum (strain ATCC 51768 / DSM 7523 / JCM 9630 / CIP 104966 / NBRC 100827 / IM2).